Reading from the N-terminus, the 140-residue chain is Small ribosomal subunit protein bS6 (140 aa).

A disordered region spans residues 96-140 (VTGQSEMLKAEENRSERRERRERPENAESNDGDDSDSNDSDNADE). Over residues 103 to 121 (LKAEENRSERRERRERPEN) the composition is skewed to basic and acidic residues. Positions 123–140 (ESNDGDDSDSNDSDNADE) are enriched in acidic residues.

This sequence belongs to the bacterial ribosomal protein bS6 family.

Functionally, binds together with bS18 to 16S ribosomal RNA. This chain is Small ribosomal subunit protein bS6, found in Ectopseudomonas mendocina (strain ymp) (Pseudomonas mendocina).